A 239-amino-acid chain; its full sequence is Ubiquinone biosynthesis O-methyltransferase (239 aa).

4 residues coordinate S-adenosyl-L-methionine: R45, G64, D85, and M129.

Belongs to the methyltransferase superfamily. UbiG/COQ3 family.

The enzyme catalyses a 3-demethylubiquinol + S-adenosyl-L-methionine = a ubiquinol + S-adenosyl-L-homocysteine + H(+). The catalysed reaction is a 3-(all-trans-polyprenyl)benzene-1,2-diol + S-adenosyl-L-methionine = a 2-methoxy-6-(all-trans-polyprenyl)phenol + S-adenosyl-L-homocysteine + H(+). Its pathway is cofactor biosynthesis; ubiquinone biosynthesis. O-methyltransferase that catalyzes the 2 O-methylation steps in the ubiquinone biosynthetic pathway. This Nitrosospira multiformis (strain ATCC 25196 / NCIMB 11849 / C 71) protein is Ubiquinone biosynthesis O-methyltransferase.